The following is a 605-amino-acid chain: Glutamine--fructose-6-phosphate aminotransferase [isomerizing] (605 aa).

The active-site Nucleophile; for GATase activity is the C2. The Glutamine amidotransferase type-2 domain occupies 2–219; that stretch reads CGIVGVVGSK…DKELVVLTKD (218 aa). 2 SIS domains span residues 285 to 424 and 457 to 595; these read IIKG…AEGE and VADL…VDKP. The active-site For Fru-6P isomerization activity is K600.

In terms of assembly, homodimer.

Its subcellular location is the cytoplasm. It catalyses the reaction D-fructose 6-phosphate + L-glutamine = D-glucosamine 6-phosphate + L-glutamate. In terms of biological role, catalyzes the first step in hexosamine metabolism, converting fructose-6P into glucosamine-6P using glutamine as a nitrogen source. The sequence is that of Glutamine--fructose-6-phosphate aminotransferase [isomerizing] from Lactococcus lactis subsp. lactis (strain IL1403) (Streptococcus lactis).